A 411-amino-acid polypeptide reads, in one-letter code: Endo-1,4-beta-xylanase A (411 aa).

The first 33 residues, 1-33 (MKKFKIRKLMARVLALALVFSTFFMVSKVDANA), serve as a signal peptide directing secretion. The 349-residue stretch at 34–382 (ASYNLMETYG…KPAYDEVVKA (349 aa)) folds into the GH10 domain. Glu-201 (proton donor) is an active-site residue. Catalysis depends on Glu-311, which acts as the Nucleophile. Positions 387–411 (FGNPGSFTPQPTITPQPTPTPSGQT) are disordered. Pro residues predominate over residues 398-411 (TITPQPTPTPSGQT).

Belongs to the glycosyl hydrolase 10 (cellulase F) family.

It catalyses the reaction Endohydrolysis of (1-&gt;4)-beta-D-xylosidic linkages in xylans.. Its pathway is glycan degradation; xylan degradation. B.fibrisolvens is located in the rumen of ruminant animals, where it contributes to the animal's digestion of plant material by hydrolyzing hemicellulose with its xylanases. This Butyrivibrio fibrisolvens protein is Endo-1,4-beta-xylanase A (xynA).